Consider the following 278-residue polypeptide: WIMGHMVNEIYQIDEFVDLGANSIETDITFDDNAMAEYSFHGVPCDCRRYCHKWEYINTFLDGLRRATTPGDSKFRKELALVVFDLKTGDLSSSTANKGGKLFGQKLLQHYWKGGNNGGRAYIILSIPDLDHYAFISGFKEALKTAGHEELLAKVGYDFSGNDDLGSTRTALNKAGVKDREHVWQSGGITNCVSTLFRGLDRVKKAVSNRDSSNGYINKVYHWTVDKYGSVRDALDAGVDGVMTNDPDVIVNVLNESKYKGKLRLATYDDNPWETFKP.

The active site involves His5. The Mg(2+) site is built by Glu25 and Asp27. The active-site Nucleophile is the His41. 2 cysteine pairs are disulfide-bonded: Cys45/Cys51 and Cys47/Cys192. Residue Asp85 participates in Mg(2+) binding.

Belongs to the arthropod phospholipase D family. Class II subfamily. Requires Mg(2+) as cofactor. As to expression, expressed by the venom gland.

It is found in the secreted. The enzyme catalyses an N-(acyl)-sphingosylphosphocholine = an N-(acyl)-sphingosyl-1,3-cyclic phosphate + choline. The catalysed reaction is an N-(acyl)-sphingosylphosphoethanolamine = an N-(acyl)-sphingosyl-1,3-cyclic phosphate + ethanolamine. It carries out the reaction a 1-acyl-sn-glycero-3-phosphocholine = a 1-acyl-sn-glycero-2,3-cyclic phosphate + choline. It catalyses the reaction a 1-acyl-sn-glycero-3-phosphoethanolamine = a 1-acyl-sn-glycero-2,3-cyclic phosphate + ethanolamine. Dermonecrotic toxins cleave the phosphodiester linkage between the phosphate and headgroup of certain phospholipids (sphingolipid and lysolipid substrates), forming an alcohol (often choline) and a cyclic phosphate. This toxin acts on sphingomyelin (SM). It may also act on ceramide phosphoethanolamine (CPE), lysophosphatidylcholine (LPC) and lysophosphatidylethanolamine (LPE), but not on lysophosphatidylserine (LPS), and lysophosphatidylglycerol (LPG). It acts by transphosphatidylation, releasing exclusively cyclic phosphate products as second products. Induces dermonecrosis, hemolysis, increased vascular permeability, edema, inflammatory response, and platelet aggregation. The sequence is that of Dermonecrotic toxin LhSicTox-alphaIV1iii from Loxosceles hirsuta (Recluse spider).